The sequence spans 165 residues: Ribosome maturation factor RimM (165 aa).

Positions 90 to 161 (EDEYFIVDLV…LITIRPSGEW (72 aa)) constitute a PRC barrel domain.

Belongs to the RimM family. In terms of assembly, binds ribosomal protein uS19.

It is found in the cytoplasm. An accessory protein needed during the final step in the assembly of 30S ribosomal subunit, possibly for assembly of the head region. Essential for efficient processing of 16S rRNA. May be needed both before and after RbfA during the maturation of 16S rRNA. It has affinity for free ribosomal 30S subunits but not for 70S ribosomes. The protein is Ribosome maturation factor RimM of Clostridium perfringens (strain SM101 / Type A).